Reading from the N-terminus, the 574-residue chain is Septation ring formation regulator EzrA (574 aa).

The Extracellular portion of the chain corresponds to 1–7 (MSSGIIL). A helical transmembrane segment spans residues 8 to 26 (LIVAIVLLVIIAYLVGVII). The Cytoplasmic portion of the chain corresponds to 27 to 574 (RKRNDSLITS…YEKTREHIRF (548 aa)). Coiled coils occupy residues 102-141 (NFIR…EEKN), 274-350 (ELVT…ETES), and 459-520 (QLEA…SFEA).

It belongs to the EzrA family.

It is found in the cell membrane. Functionally, negative regulator of FtsZ ring formation; modulates the frequency and position of FtsZ ring formation. Inhibits FtsZ ring formation at polar sites. Interacts either with FtsZ or with one of its binding partners to promote depolymerization. In Streptococcus pyogenes serotype M4 (strain MGAS10750), this protein is Septation ring formation regulator EzrA.